Reading from the N-terminus, the 567-residue chain is Proline--tRNA ligase (567 aa).

Belongs to the class-II aminoacyl-tRNA synthetase family. ProS type 1 subfamily. Homodimer.

Its subcellular location is the cytoplasm. It catalyses the reaction tRNA(Pro) + L-proline + ATP = L-prolyl-tRNA(Pro) + AMP + diphosphate. Catalyzes the attachment of proline to tRNA(Pro) in a two-step reaction: proline is first activated by ATP to form Pro-AMP and then transferred to the acceptor end of tRNA(Pro). As ProRS can inadvertently accommodate and process non-cognate amino acids such as alanine and cysteine, to avoid such errors it has two additional distinct editing activities against alanine. One activity is designated as 'pretransfer' editing and involves the tRNA(Pro)-independent hydrolysis of activated Ala-AMP. The other activity is designated 'posttransfer' editing and involves deacylation of mischarged Ala-tRNA(Pro). The misacylated Cys-tRNA(Pro) is not edited by ProRS. The chain is Proline--tRNA ligase from Geobacillus kaustophilus (strain HTA426).